Here is a 161-residue protein sequence, read N- to C-terminus: Urease accessory protein UreE (161 aa).

The tract at residues 133–161 is disordered; that stretch reads EPEAGAYQSAPHSHSHAHDHPFVRLPAHS.

It belongs to the UreE family.

The protein localises to the cytoplasm. In terms of biological role, involved in urease metallocenter assembly. Binds nickel. Probably functions as a nickel donor during metallocenter assembly. This is Urease accessory protein UreE from Pseudomonas putida (strain W619).